Here is a 475-residue protein sequence, read N- to C-terminus: GDP-fucose protein O-fucosyltransferase 3 (475 aa).

Topologically, residues 1–8 are cytoplasmic; that stretch reads MVRMRRKR. Residues 9 to 29 form a helical; Signal-anchor for type II membrane protein membrane-spanning segment; the sequence is LWASCICFAAFFFLLVTLQVI. The Lumenal segment spans residues 30–475; it reads TELGNSENKA…QEFWMLVFKQ (446 aa). Residues Asn107, Asn165, and Asn315 are each glycosylated (N-linked (GlcNAc...) asparagine). Residues Cys386 and Cys389 are joined by a disulfide bond. Residue Asn462 is glycosylated (N-linked (GlcNAc...) asparagine).

This sequence belongs to the glycosyltransferase 10 family.

The protein localises to the endoplasmic reticulum membrane. The enzyme catalyses L-threonyl-[protein] + GDP-beta-L-fucose = 3-O-(alpha-L-fucosyl)-L-threonyl-[protein] + GDP + H(+). The catalysed reaction is L-seryl-[protein] + GDP-beta-L-fucose = 3-O-(alpha-L-fucosyl)-L-seryl-[protein] + GDP + H(+). The protein operates within protein modification; protein glycosylation. Protein O-fucosyltransferase that specifically catalyzes O-fucosylation of serine or threonine residues in EMI domains of target proteins. Attaches fucose through an O-glycosidic linkage. O-fucosylation of EMI domain-containing proteins may be required for facilitating protein folding and secretion. The sequence is that of GDP-fucose protein O-fucosyltransferase 3 (FUT10) from Gallus gallus (Chicken).